The sequence spans 1275 residues: Inner capsid protein lambda-1 (1275 aa).

Residues 1–12 (MKRIPRKTKGKS) are compositionally biased toward basic residues. Positions 1–149 (MKRIPRKTKG…DNEGGSNQKP (149 aa)) are disordered. Composition is skewed to basic and acidic residues over residues 18–35 (DSTERSDDGSSQLRDKQN) and 75–117 (NNDE…DKSK). Residues 118–149 (AQVTYSDTGINNANELSRSGNVDNEGGSNQKP) show a composition bias toward polar residues. The C2H2-type zinc finger occupies 181-203 (YQCHVCSAVLFSPLDLDAHVASH).

This sequence belongs to the turreted BTV-fold inner capsid family. As to quaternary structure, homodecamer; each decamer is made up of two conformers of VP2, called VP2A and VP2B. 12 homodecamers assemble to form an icosahedral capsid. Interacts with protein mu-NS; in viral inclusions. Requires Mg(2+) as cofactor. The cofactor is Mn(2+).

It localises to the virion. The enzyme catalyses ATP + H2O = ADP + phosphate + H(+). In terms of biological role, inner capsid protein that self-assembles to form an icosahedral capsid with a T=2 symmetry, which consists of 120 copies of VP2, with channels at each of its five-fold vertices. This capsid constitutes the innermost concentric layer of the viral mature particle. Displays NTPase, RNA 5'-triphosphatase (RTPase) and RNA helicase activities and probably participates in transcription of the viral genome. Helicase activity might be involved in unwinding or reannealing dsRNA during RNA synthesis. RTPase enzymatic activity represents the first step in RNA capping, which yields a 5'-diphosphorylated plus-strand RNA. The protein is Inner capsid protein lambda-1 (L3) of Reovirus type 1 (strain Lang) (T1L).